We begin with the raw amino-acid sequence, 689 residues long: Probable serine/threonine-protein kinase abkC (689 aa).

The disordered stretch occupies residues 42–79 (NNSGNENYKNFNYNYKNKNNYNNNNNNNNSNSSSNNNG). Positions 257–689 (WFDEEPMASG…NNKNNNEKNK (433 aa)) constitute a Protein kinase domain. ATP is bound by residues 263 to 271 (MASGSVAQV) and lysine 285. Aspartate 417 serves as the catalytic Proton acceptor. The disordered stretch occupies residues 652–689 (KQLNNDNNNNNNNNNNNKNNNDNNNKNNNNKNNNEKNK). Low complexity predominate over residues 655–683 (NNDNNNNNNNNNNNKNNNDNNNKNNNNKN).

This sequence belongs to the protein kinase superfamily. ADCK protein kinase family.

The chain is Probable serine/threonine-protein kinase abkC (abkC) from Dictyostelium discoideum (Social amoeba).